The chain runs to 216 residues: Elongation factor Ts (216 aa).

An involved in Mg(2+) ion dislocation from EF-Tu region spans residues 80–83 (TDFV).

The protein belongs to the EF-Ts family.

It localises to the cytoplasm. In terms of biological role, associates with the EF-Tu.GDP complex and induces the exchange of GDP to GTP. It remains bound to the aminoacyl-tRNA.EF-Tu.GTP complex up to the GTP hydrolysis stage on the ribosome. In Alkaliphilus oremlandii (strain OhILAs) (Clostridium oremlandii (strain OhILAs)), this protein is Elongation factor Ts.